We begin with the raw amino-acid sequence, 159 residues long: Ribosomal RNA large subunit methyltransferase H (159 aa).

Residues L76, G108, and 127–132 (FSRMTF) contribute to the S-adenosyl-L-methionine site.

The protein belongs to the RNA methyltransferase RlmH family. In terms of assembly, homodimer.

It localises to the cytoplasm. The catalysed reaction is pseudouridine(1915) in 23S rRNA + S-adenosyl-L-methionine = N(3)-methylpseudouridine(1915) in 23S rRNA + S-adenosyl-L-homocysteine + H(+). Functionally, specifically methylates the pseudouridine at position 1915 (m3Psi1915) in 23S rRNA. This is Ribosomal RNA large subunit methyltransferase H from Bacillus licheniformis (strain ATCC 14580 / DSM 13 / JCM 2505 / CCUG 7422 / NBRC 12200 / NCIMB 9375 / NCTC 10341 / NRRL NRS-1264 / Gibson 46).